A 180-amino-acid polypeptide reads, in one-letter code: Putative 3-methyladenine DNA glycosylase (180 aa).

This sequence belongs to the DNA glycosylase MPG family.

The chain is Putative 3-methyladenine DNA glycosylase from Ehrlichia chaffeensis (strain ATCC CRL-10679 / Arkansas).